The following is a 153-amino-acid chain: ATP synthase subunit b' (153 aa).

A helical transmembrane segment spans residues 20-40 (TLPLMAAQVVLLTFILNALFF).

Belongs to the ATPase B chain family. F-type ATPases have 2 components, F(1) - the catalytic core - and F(0) - the membrane proton channel. F(1) has five subunits: alpha(3), beta(3), gamma(1), delta(1), epsilon(1). F(0) has four main subunits: a(1), b(1), b'(1) and c(10-14). The alpha and beta chains form an alternating ring which encloses part of the gamma chain. F(1) is attached to F(0) by a central stalk formed by the gamma and epsilon chains, while a peripheral stalk is formed by the delta, b and b' chains.

The protein localises to the cellular thylakoid membrane. In terms of biological role, f(1)F(0) ATP synthase produces ATP from ADP in the presence of a proton or sodium gradient. F-type ATPases consist of two structural domains, F(1) containing the extramembraneous catalytic core and F(0) containing the membrane proton channel, linked together by a central stalk and a peripheral stalk. During catalysis, ATP synthesis in the catalytic domain of F(1) is coupled via a rotary mechanism of the central stalk subunits to proton translocation. Its function is as follows. Component of the F(0) channel, it forms part of the peripheral stalk, linking F(1) to F(0). The b'-subunit is a diverged and duplicated form of b found in plants and photosynthetic bacteria. The sequence is that of ATP synthase subunit b' from Prochlorococcus marinus (strain SARG / CCMP1375 / SS120).